Here is a 428-residue protein sequence, read N- to C-terminus: 3-phosphoshikimate 1-carboxyvinyltransferase (428 aa).

3-phosphoshikimate-binding residues include lysine 19, serine 20, and arginine 24. Lysine 19 contributes to the phosphoenolpyruvate binding site. 2 residues coordinate phosphoenolpyruvate: glycine 91 and arginine 119. The 3-phosphoshikimate site is built by serine 164, glutamine 166, aspartate 312, and lysine 339. Glutamine 166 provides a ligand contact to phosphoenolpyruvate. Aspartate 312 functions as the Proton acceptor in the catalytic mechanism. Residues arginine 343 and arginine 386 each coordinate phosphoenolpyruvate.

This sequence belongs to the EPSP synthase family. Monomer.

Its subcellular location is the cytoplasm. It carries out the reaction 3-phosphoshikimate + phosphoenolpyruvate = 5-O-(1-carboxyvinyl)-3-phosphoshikimate + phosphate. The protein operates within metabolic intermediate biosynthesis; chorismate biosynthesis; chorismate from D-erythrose 4-phosphate and phosphoenolpyruvate: step 6/7. Its function is as follows. Catalyzes the transfer of the enolpyruvyl moiety of phosphoenolpyruvate (PEP) to the 5-hydroxyl of shikimate-3-phosphate (S3P) to produce enolpyruvyl shikimate-3-phosphate and inorganic phosphate. This Bacillus pumilus (strain SAFR-032) protein is 3-phosphoshikimate 1-carboxyvinyltransferase.